A 410-amino-acid chain; its full sequence is D-3-phosphoglycerate dehydrogenase (410 aa).

Residues 162–163 (HI), Asp182, 239–241 (AAR), and Asp265 contribute to the NAD(+) site. Arg241 is a catalytic residue. The active site involves Glu270. The active-site Proton donor is His293. 293–296 (HIGG) contacts NAD(+). One can recognise an ACT domain in the interval 341–410 (RLLHIHENRP…DGTIRARVLY (70 aa)).

It belongs to the D-isomer specific 2-hydroxyacid dehydrogenase family.

The catalysed reaction is (2R)-3-phosphoglycerate + NAD(+) = 3-phosphooxypyruvate + NADH + H(+). The enzyme catalyses (R)-2-hydroxyglutarate + NAD(+) = 2-oxoglutarate + NADH + H(+). The protein operates within amino-acid biosynthesis; L-serine biosynthesis; L-serine from 3-phospho-D-glycerate: step 1/3. In bacteria displays feedback inhibition by L-serine. Functionally, catalyzes the reversible oxidation of 3-phospho-D-glycerate to 3-phosphonooxypyruvate, the first step of the phosphorylated L-serine biosynthesis pathway. Also catalyzes the reversible oxidation of 2-hydroxyglutarate to 2-oxoglutarate. This Haemophilus influenzae (strain ATCC 51907 / DSM 11121 / KW20 / Rd) protein is D-3-phosphoglycerate dehydrogenase (serA).